The sequence spans 554 residues: Formate--tetrahydrofolate ligase (554 aa).

Residue 64-71 (TPAGEGKS) participates in ATP binding.

Belongs to the formate--tetrahydrofolate ligase family.

It carries out the reaction (6S)-5,6,7,8-tetrahydrofolate + formate + ATP = (6R)-10-formyltetrahydrofolate + ADP + phosphate. It functions in the pathway one-carbon metabolism; tetrahydrofolate interconversion. The sequence is that of Formate--tetrahydrofolate ligase from Leuconostoc citreum (strain KM20).